A 203-amino-acid chain; its full sequence is Lectin (203 aa).

A signal peptide spans 1–20; sequence MINILHVIAGLALASVGVDA. Positions 21 to 53 are excised as a propeptide; that stretch reads RQVGVGADVLHAVENTIDSITGVEASHSALEVG.

As to quaternary structure, monomer.

In terms of biological role, N-acetyl-D-glucosamine-specific lectin. Specifically agglutinates rabbit erythrocytes. The sequence is that of Lectin (UPL1) from Ulva pertusa (Sea lettuce).